Consider the following 172-residue polypeptide: Centrin-2 (172 aa).

A disordered region spans residues 1–30; sequence MASNFKKANMASSSQRKRMSPKPELTEEQK. Ala2 is modified (N-acetylalanine). The interval 2 to 25 is required for self-assembly; it reads ASNFKKANMASSSQRKRMSPKPEL. Ser20 is subject to Phosphoserine. A Glycyl lysine isopeptide (Lys-Gly) (interchain with G-Cter in SUMO2) cross-link involves residue Lys22. Residue Thr26 is modified to Phosphothreonine. EF-hand domains follow at residues 28-63, 64-99, 101-136, and 137-172; these read EQKQ…LGFE, PKKE…KMSE, DTKE…LGEN, and LTDE…TSLY. The Ca(2+) site is built by Asp41, Asp43, Thr45, Thr47, and Glu52. Residues Asp150, Asp152, Asp154, Glu156, and Glu161 each coordinate Ca(2+).

The protein belongs to the centrin family. As to quaternary structure, monomer. Homooligomer. Interacts with SFI1. Interacts with CCP110. Component of the XPC complex composed of XPC, RAD23B and CETN2. Component of the nuclear pore complex (NPC)-associated TREX-2 complex (transcription and export complex 2), composed of at least GANP, 2 copies of ENY2, PCID2, SEM1/DSS1, and either centrin CETN2 or centrin CETN3. The TREX-2 complex also associates with ALYREF/ALY and with the nucleoporin NUP153. Interacts with USP49. Forms a microtubule-associated complex with POC5, POC1B and FAM161A. Interacts with CCDC15.

The protein localises to the cytoplasm. It localises to the cytoskeleton. The protein resides in the microtubule organizing center. It is found in the centrosome. Its subcellular location is the centriole. The protein localises to the nucleus envelope. It localises to the nucleus. The protein resides in the nuclear pore complex. In terms of biological role, plays a fundamental role in microtubule organizing center structure and function. Required for centriole duplication and correct spindle formation. Has a role in regulating cytokinesis and genome stability via cooperation with CALM1 and CCP110. Its function is as follows. Involved in global genome nucleotide excision repair (GG-NER) by acting as component of the XPC complex. Cooperatively with RAD23B appears to stabilize XPC. In vitro, stimulates DNA binding of the XPC:RAD23B dimer. The XPC complex is proposed to represent the first factor bound at the sites of DNA damage and together with other core recognition factors, XPA, RPA and the TFIIH complex, is part of the pre-incision (or initial recognition) complex. The XPC complex recognizes a wide spectrum of damaged DNA characterized by distortions of the DNA helix such as single-stranded loops, mismatched bubbles or single-stranded overhangs. The orientation of XPC complex binding appears to be crucial for inducing a productive NER. XPC complex is proposed to recognize and to interact with unpaired bases on the undamaged DNA strand which is followed by recruitment of the TFIIH complex and subsequent scanning for lesions in the opposite strand in a 5'-to-3' direction by the NER machinery. Cyclobutane pyrimidine dimers (CPDs) which are formed upon UV-induced DNA damage esacpe detection by the XPC complex due to a low degree of structural perurbation. Instead they are detected by the UV-DDB complex which in turn recruits and cooperates with the XPC complex in the respective DNA repair. Functionally, as a component of the TREX-2 complex, involved in the export of mRNAs to the cytoplasm through the nuclear pores. The chain is Centrin-2 (CETN2) from Homo sapiens (Human).